A 163-amino-acid chain; its full sequence is MFSMVTGFMNYSQQTIRAARYIGQSFVITLSHTNRLPITIQYPYEKSITSERFRGRIHFEFDKCIACEVCVRVCPIDLPVVDWRFERDIKKKQLLNYSIDFGVCIFCGNCVEYCPTNCLSMTEEYELSTSDRHEDYTIQTVMNSTQIKIDKDKPFDSRTITNY.

4Fe-4S ferredoxin-type domains follow at residues G55 to R84 and L95 to E124. The [4Fe-4S] cluster site is built by C64, C67, C70, C74, C104, C107, C110, and C114.

The protein belongs to the complex I 23 kDa subunit family. As to quaternary structure, NDH is composed of at least 16 different subunits, 5 of which are encoded in the nucleus. [4Fe-4S] cluster serves as cofactor.

The protein localises to the plastid. Its subcellular location is the chloroplast thylakoid membrane. It catalyses the reaction a plastoquinone + NADH + (n+1) H(+)(in) = a plastoquinol + NAD(+) + n H(+)(out). It carries out the reaction a plastoquinone + NADPH + (n+1) H(+)(in) = a plastoquinol + NADP(+) + n H(+)(out). In terms of biological role, NDH shuttles electrons from NAD(P)H:plastoquinone, via FMN and iron-sulfur (Fe-S) centers, to quinones in the photosynthetic chain and possibly in a chloroplast respiratory chain. The immediate electron acceptor for the enzyme in this species is believed to be plastoquinone. Couples the redox reaction to proton translocation, and thus conserves the redox energy in a proton gradient. This chain is NAD(P)H-quinone oxidoreductase subunit I, chloroplastic (ndhI), found in Phoenix dactylifera (Date palm).